Reading from the N-terminus, the 195-residue chain is CASP-like protein 1B1 (195 aa).

The Cytoplasmic segment spans residues 1-25; the sequence is MDLEKGKKPSEQAAACRIMQVKDKL. The chain crosses the membrane as a helical span at residues 26-46; sequence ITLQPVVRACVFLATAVAAVI. Residues 47–78 lie on the Extracellular side of the membrane; the sequence is MGLNKQSYTTVVAIVGTRPVTQTFTAKFKDTP. The chain crosses the membrane as a helical span at residues 79–99; that stretch reads AFVFFVIANAIASGYNLMVLV. The Cytoplasmic portion of the chain corresponds to 100–114; sequence TRRILQRRAQSLSVH. Residues 115–135 form a helical membrane-spanning segment; the sequence is LLDMVILTLLATGSATAASMA. The Extracellular segment spans residues 136–160; sequence QLGKNGNLHARWNPICDKFGSFCNH. A helical transmembrane segment spans residues 161 to 181; the sequence is GGIALMSSFIGVALMLALNLL. Over 182 to 195 the chain is Cytoplasmic; it reads SAAANSPRSNVTGQ.

This sequence belongs to the Casparian strip membrane proteins (CASP) family. Homodimer and heterodimers.

It is found in the cell membrane. The protein is CASP-like protein 1B1 of Oryza sativa subsp. indica (Rice).